The following is a 140-amino-acid chain: MAEEPQTVLQLPPSSAAGGEGLTDVSPETTTPEPPSSAAVSPGTEEPAGDTKKKIDILLKAVGDTPIMKTKKWAVERTRTIQGPIDFIKKFLKLVASEQLFIYVNQSFAPSPDQEVGTLYECFGSDGKLVLHYCKSQAWG.

Residues 1 to 52 (MAEEPQTVLQLPPSSAAGGEGLTDVSPETTTPEPPSSAAVSPGTEEPAGDTK) form a disordered region. Residues 25-42 (VSPETTTPEPPSSAAVSP) show a composition bias toward low complexity. G140 participates in a covalent cross-link: Glycyl lysine isopeptide (Gly-Lys) (interchain with K-? in acceptor protein).

It belongs to the ATG12 family. As to quaternary structure, forms a conjugate with ATG5. Part of the minor complex composed of 4 sets of ATG12-ATG5 and ATG16L1 (400 kDa); this complex interacts with ATG3 leading to disruption of ATG7 interaction and promotion of ATG8-like proteins lipidation. Forms an 800-kDa complex composed of ATG12-ATG5 and ATG16L2. Interacts with DHX58/RIG-1, IFIH1/MDA5 and MAVS/IPS-1 in monomeric form as well as in ATG12-ATG5 conjugate. The interaction with MAVS is further enhanced upon vesicular stomatitis virus (VSV) infection. Interacts with ATG3; this interaction is essential for phosphatidylethanolamine (PE)-conjugated ATG8-like proteins formation. Interacts with ATG7. Interacts with ATG10. Interacts with TECPR1. Interacts with SH3BGRL. The ATG12-ATG5 conjugate interacts with PDCD6IP (via the BRO1 domain); this interaction is bridged by ATG12 and promotes multiple PDCD6IP-mediated functions such as endolysosomal trafficking, macroautophagy and exosome biogenesis. Post-translationally, acetylated by EP300.

The protein resides in the cytoplasm. It is found in the preautophagosomal structure membrane. Its function is as follows. Ubiquitin-like protein involved in autophagy vesicles formation. Conjugation with ATG5 through a ubiquitin-like conjugating system involving also ATG7 as an E1-like activating enzyme and ATG10 as an E2-like conjugating enzyme, is essential for its function. The ATG12-ATG5 conjugate acts as an E3-like enzyme which is required for lipidation of ATG8 family proteins and their association to the vesicle membranes. The ATG12-ATG5 conjugate also negatively regulates the innate antiviral immune response by blocking the type I IFN production pathway through direct association with RARRES3 and MAVS. Also plays a role in translation or delivery of incoming viral RNA to the translation apparatus. As part of the ATG8 conjugation system with ATG5 and ATG16L1, required for recruitment of LRRK2 to stressed lysosomes and induction of LRRK2 kinase activity in response to lysosomal stress. The polypeptide is Ubiquitin-like protein ATG12 (Pongo abelii (Sumatran orangutan)).